The chain runs to 49 residues: Large ribosomal subunit protein bL32 (49 aa).

Residues 25–49 are disordered; that stretch reads AKPVKDKDGTYKLPHHINPTTGEYK.

Belongs to the bacterial ribosomal protein bL32 family.

In Sulfurimonas denitrificans (strain ATCC 33889 / DSM 1251) (Thiomicrospira denitrificans (strain ATCC 33889 / DSM 1251)), this protein is Large ribosomal subunit protein bL32.